An 84-amino-acid polypeptide reads, in one-letter code: Anthracycline acyl carrier protein DpsG (84 aa).

The Carrier domain occupies 3–80 (ELSLAELREI…SMLIFVNERL (78 aa)). The residue at position 40 (Ser-40) is an O-(pantetheine 4'-phosphoryl)serine.

Its pathway is antibiotic biosynthesis; daunorubicin biosynthesis. The protein operates within antibiotic biosynthesis; carminomycin biosynthesis. It functions in the pathway antibiotic biosynthesis; rhodomycin biosynthesis. It participates in antibiotic biosynthesis; aclacinomycin biosynthesis. Its function is as follows. Involved in the biosynthesis of aklanonate which is an important precursor common to the formation of the clinically significant anthracyclines such as carminomycin, daunorubicin (daunomycin), rhodomycin, aclacinomycin T (aklavin) and aclacinomycin A (aclarubicin). These compounds are aromatic polyketide antibiotics that exhibit high cytotoxicity and are widely applied in the chemotherapy of a variety of cancers. This chain is Anthracycline acyl carrier protein DpsG (dpsG), found in Streptomyces peucetius.